The following is a 472-amino-acid chain: Chromosomal replication initiator protein DnaA (472 aa).

Residues 1 to 80 (MDTKQIWFTT…YQVNVRVIIS (80 aa)) form a domain I, interacts with DnaA modulators region. A domain II region spans residues 80-130 (SSATPAPSEPVAVTPSEPSPTTEVAEPSFASFNQAAPMLNQLPLGDPNRSS). Positions 131–347 (VLNPRYTFSS…GCLNRVIAYA (217 aa)) are domain III, AAA+ region. 4 residues coordinate ATP: glycine 175, glycine 177, lysine 178, and threonine 179. The domain IV, binds dsDNA stretch occupies residues 348 to 472 (NLNRTPVTVE…RQRLYGENAR (125 aa)).

Belongs to the DnaA family. As to quaternary structure, oligomerizes as a right-handed, spiral filament on DNA at oriC.

The protein localises to the cytoplasm. In terms of biological role, plays an essential role in the initiation and regulation of chromosomal replication. ATP-DnaA binds to the origin of replication (oriC) to initiate formation of the DNA replication initiation complex once per cell cycle. Binds the DnaA box (a 9 base pair repeat at the origin) and separates the double-stranded (ds)DNA. Forms a right-handed helical filament on oriC DNA; dsDNA binds to the exterior of the filament while single-stranded (ss)DNA is stabiized in the filament's interior. The ATP-DnaA-oriC complex binds and stabilizes one strand of the AT-rich DNA unwinding element (DUE), permitting loading of DNA polymerase. After initiation quickly degrades to an ADP-DnaA complex that is not apt for DNA replication. Binds acidic phospholipids. This Herpetosiphon aurantiacus (strain ATCC 23779 / DSM 785 / 114-95) protein is Chromosomal replication initiator protein DnaA.